A 200-amino-acid polypeptide reads, in one-letter code: Probable nicotinate-nucleotide adenylyltransferase (200 aa).

This sequence belongs to the NadD family.

The catalysed reaction is nicotinate beta-D-ribonucleotide + ATP + H(+) = deamido-NAD(+) + diphosphate. The protein operates within cofactor biosynthesis; NAD(+) biosynthesis; deamido-NAD(+) from nicotinate D-ribonucleotide: step 1/1. Its function is as follows. Catalyzes the reversible adenylation of nicotinate mononucleotide (NaMN) to nicotinic acid adenine dinucleotide (NaAD). This is Probable nicotinate-nucleotide adenylyltransferase from Leifsonia xyli subsp. xyli (strain CTCB07).